Consider the following 733-residue polypeptide: 1,4-alpha-glucan branching enzyme GlgB (733 aa).

Catalysis depends on aspartate 412, which acts as the Nucleophile. The active-site Proton donor is the glutamate 467.

It belongs to the glycosyl hydrolase 13 family. GlgB subfamily. As to quaternary structure, monomer.

It carries out the reaction Transfers a segment of a (1-&gt;4)-alpha-D-glucan chain to a primary hydroxy group in a similar glucan chain.. Its pathway is glycan biosynthesis; glycogen biosynthesis. Functionally, catalyzes the formation of the alpha-1,6-glucosidic linkages in glycogen by scission of a 1,4-alpha-linked oligosaccharide from growing alpha-1,4-glucan chains and the subsequent attachment of the oligosaccharide to the alpha-1,6 position. The polypeptide is 1,4-alpha-glucan branching enzyme GlgB (Burkholderia vietnamiensis (strain G4 / LMG 22486) (Burkholderia cepacia (strain R1808))).